The primary structure comprises 3926 residues: Hybrid PKS-NRPS synthetase LUC5 (3926 aa).

The 432-residue stretch at 8 to 439 (REPIAIVGTA…GTNAHAIIES (432 aa)) folds into the Ketosynthase family 3 (KS3) domain. Active-site for beta-ketoacyl synthase activity residues include C181, H318, and H359. The interval 545 to 863 (VFTGQGAQWP…QGALTRNVHD (319 aa)) is malonyl-CoA:ACP transacylase (MAT) domain. The tract at residues 932 to 1065 (HPLLGTRSTE…GHLRVDFGSE (134 aa)) is N-terminal hotdog fold. The dehydratase (DH) domain stretch occupies residues 932–1225 (HPLLGTRSTE…GLTCTSLLRP (294 aa)). Residues 932-1228 (HPLLGTRSTE…CTSLLRPGPS (297 aa)) enclose the PKS/mFAS DH domain. H964 serves as the catalytic Proton acceptor; for dehydratase activity. Positions 1081–1228 (LTSVNIERFY…CTSLLRPGPS (148 aa)) are C-terminal hotdog fold. Residue D1138 is the Proton donor; for dehydratase activity of the active site. A C-methyltransferase (CMeT) domain region spans residues 1344–1572 (IRAVGENLTE…VNDFYDPSKY (229 aa)). The segment at 2091–2265 (TYLLAGCTGG…AASVIHIGMI (175 aa)) is ketoreductase (KR) domain 1. Residues 2371–2448 (EMLEVVEEEF…EICSTAVASL (78 aa)) form the Carrier 1 domain. S2408 is subject to O-(pantetheine 4'-phosphoryl)serine. Polar residues predominate over residues 2474-2506 (VSGNGSSSSRAPTEFNSSTLKSGAQSTQGTSVS). Residues 2474-2518 (VSGNGSSSSRAPTEFNSSTLKSGAQSTQGTSVSGDKDTNSVDGSA) form a disordered region. Basic and acidic residues predominate over residues 2507–2518 (GDKDTNSVDGSA). Residues 2525-2810 (PLSFAQERIW…VNLLPLRFQL (286 aa)) form a condensation region. The adenylation stretch occupies residues 2979 to 3389 (DWVKRQPDAI…RIAGDSQIKL (411 aa)). The Carrier 2 domain occupies 3501–3580 (ETLTTTQERL…GMAAKIDGST (80 aa)). O-(pantetheine 4'-phosphoryl)serine is present on S3540. Residues 3619-3840 (LTGATGFLGL…DFVPVEQVAD (222 aa)) form a thiolester reductase (TE) domain region.

In the C-terminal section; belongs to the NRP synthetase family.

It participates in mycotoxin biosynthesis. Hybrid PKS-NRPS synthetase; part of the gene cluster that mediates the biosynthesis of the mycotoxin lucilactaene and the lucilactaene-related compound NG-391 that act as cell cycle inhibitors with potent growth inhibitory activity against malarial parasites, moderate growth inhibitory activity against cancer cells, and no activity against bacteria and fungi. The hybrid PKS-NRPS synthetase LUC5 is responsible for the condensation of one acetyl-coenzyme A (CoA) unit with six malonyl-CoA units and the amide linkage of the arising heptaketide and homoserine, subsequently releasing the first intermediate prelucilactaene B, as an alcohol with an open ring structure. Lucilactaene and NG-391 lack the 7-methyl group present in fusarins which is inserted in fusarins by the C-methyltransferase (CMeT) domain of the fusarin synthetase FUS1, suggesting that the CMet domain of LUC5 does not methylate this position. Within the pathway, both the cytochrome P450 monooxygenase LUC2 and the hydrolase LUC6 function in parallel in modification of prelucilactaene B. LUC6 may catalyze the 2-pyrrolidone ring formation to form prelucilactaene C from prelucilactaene B, followed by C-15 hydroxylation by the same enzyme to give prelucilactaene D, which is then converted to prelucilactaene E by epoxidation, and finally to prelucilactaene F by cyclization. Prelucilactane D, prelucilactaene E, and prelucilactaene F can be converted to dihydrolucilactaene, NG391, and lucilactaene, respectively, via C-20 methyl group hydroxylation by the cytochrome P450 monooxygenase LUC2. However, LUC2, unlike FUS8 in fusarin C biosynthesis, is not enough for the full oxidation of the C-20 methyl group into carboxylic acid, which is a prerequisite for the final methylation step. The aldehyde dehydrogenase LUC3 is involved in the biosynthesis by further oxidation of the C-20 alcoholic analog prelucilactaene G into a carboxylic derivative. This unidentified carboxylic derivative may be converted to demethyllucilactaene. As the last step, the methyltransferase LUC1 methylates the hydroxyl group at C-21 of demethyllucilactaene to generate lucilactaene. In Fusarium sp, this protein is Hybrid PKS-NRPS synthetase LUC5.